We begin with the raw amino-acid sequence, 422 residues long: Glucosylglycerol-phosphate phosphatase (422 aa).

Asp-403 (proton donor) is an active-site residue.

The protein belongs to the histidine acid phosphatase family. In terms of assembly, monomer. Interacts with GGPS.

The enzyme catalyses 2-O-(alpha-D-glucopyranosyl)-sn-glycerol 3-phosphate + H2O = 2-O-(alpha-D-glucopyranosyl)glycerol + phosphate. In terms of biological role, phosphorylates glucosylglycerol-phosphate the precursor of the osmoprotectant glucosylglycerol necessary for salt adaptation of Synechocystis. The sequence is that of Glucosylglycerol-phosphate phosphatase (stpA) from Synechocystis sp. (strain ATCC 27184 / PCC 6803 / Kazusa).